The sequence spans 454 residues: Mediator of RNA polymerase II transcription subunit 1 (454 aa).

The protein belongs to the Mediator complex subunit 1 family. Component of the Mediator complex.

The protein localises to the nucleus. Its function is as follows. Component of the Mediator complex, a coactivator involved in the regulated transcription of nearly all RNA polymerase II-dependent genes. Mediator functions as a bridge to convey information from gene-specific regulatory proteins to the basal RNA polymerase II transcription machinery. Mediator is recruited to promoters by direct interactions with regulatory proteins and serves as a scaffold for the assembly of a functional preinitiation complex with RNA polymerase II and the general transcription factors. In Schizosaccharomyces pombe (strain 972 / ATCC 24843) (Fission yeast), this protein is Mediator of RNA polymerase II transcription subunit 1 (med1).